The following is a 65-amino-acid chain: Adrenergic toxin rho-elapitoxin-Dp1a (65 aa).

Disulfide bonds link cysteine 3–cysteine 24, cysteine 17–cysteine 42, cysteine 46–cysteine 57, and cysteine 58–cysteine 63.

Belongs to the three-finger toxin family. Short-chain subfamily. Aminergic toxin sub-subfamily. Expressed by the venom gland.

The protein localises to the secreted. In terms of biological role, this toxin shows activities on different G-protein coupled receptors. It is highly potent on various alpha-adrenoceptors (ADRA) (subnanomolar affinity for ADRA1A). Order of potency is the following: ADRA1A &gt; ADRA1B &gt; ADRA1D &gt; ADRA2C. It is also found to reversibly bind to muscarinic acetylcholine receptors (CHRM), but the affinity is much weaker (CHRM1 and CHRM2, Ki&gt;1 uM; CHRM3, Ki=140 nM; CHRM4, Ki=120 nM; CHRM5, Ki=350 nM). This Dendroaspis polylepis polylepis (Black mamba) protein is Adrenergic toxin rho-elapitoxin-Dp1a.